Consider the following 162-residue polypeptide: Probable chemoreceptor glutamine deamidase CheD (162 aa).

This sequence belongs to the CheD family.

It carries out the reaction L-glutaminyl-[protein] + H2O = L-glutamyl-[protein] + NH4(+). In terms of biological role, probably deamidates glutamine residues to glutamate on methyl-accepting chemotaxis receptors (MCPs), playing an important role in chemotaxis. The sequence is that of Probable chemoreceptor glutamine deamidase CheD from Clostridium botulinum (strain Eklund 17B / Type B).